The primary structure comprises 226 residues: ATP synthase subunit a (226 aa).

The next 6 helical transmembrane spans lie at 17-37, 79-99, 105-125, 134-154, 176-196, and 199-219; these read FSYFFHIGLVALIAVIVAMMA, LVATLGIIVFFSNIIGILPGF, SLNLTLSLAIIVFVYYHFEGI, FAHFMGPIKLLAPLMFPIEIV, LFLMVILALVPYIAPLPAYVL, and FMAFLQAFIFMILTYVYLAGA.

It belongs to the ATPase A chain family. In terms of assembly, F-type ATPases have 2 components, CF(1) - the catalytic core - and CF(0) - the membrane proton channel. CF(1) has five subunits: alpha(3), beta(3), gamma(1), delta(1), epsilon(1). CF(0) has three main subunits: a(1), b(2) and c(9-12). The alpha and beta chains form an alternating ring which encloses part of the gamma chain. CF(1) is attached to CF(0) by a central stalk formed by the gamma and epsilon chains, while a peripheral stalk is formed by the delta and b chains.

The protein localises to the cell inner membrane. Its function is as follows. Key component of the proton channel; it plays a direct role in the translocation of protons across the membrane. This chain is ATP synthase subunit a, found in Campylobacter jejuni subsp. doylei (strain ATCC BAA-1458 / RM4099 / 269.97).